Consider the following 367-residue polypeptide: 2-aminoethylphosphonate--pyruvate transaminase (367 aa).

Position 194 is an N6-(pyridoxal phosphate)lysine (K194).

This sequence belongs to the class-V pyridoxal-phosphate-dependent aminotransferase family. PhnW subfamily. In terms of assembly, homodimer. The cofactor is pyridoxal 5'-phosphate.

The enzyme catalyses (2-aminoethyl)phosphonate + pyruvate = phosphonoacetaldehyde + L-alanine. Involved in phosphonate degradation. This Salmonella heidelberg (strain SL476) protein is 2-aminoethylphosphonate--pyruvate transaminase.